Here is a 1183-residue protein sequence, read N- to C-terminus: Spermatogenesis-associated protein 31G1 (1183 aa).

Disordered stretches follow at residues Thr109–Phe153, Leu469–Ala555, Thr661–Pro686, Ala843–Val884, Cys973–Leu1032, and Gln1048–Ala1087. Residues Cys124 to Glu134 show a composition bias toward basic and acidic residues. Over residues Thr135–Phe153 the composition is skewed to polar residues. Residues Asn487–His509 are compositionally biased toward basic and acidic residues. Over residues Thr671–Glu685 the composition is skewed to polar residues. The span at Pro847 to Thr858 shows a compositional bias: pro residues. A compositionally biased stretch (polar residues) spans His975–Ala984. Residues Gln993–Ala1002 show a composition bias toward basic residues. The span at Ser1069–Ala1079 shows a compositional bias: polar residues.

In terms of tissue distribution, expressed in kidney and testis. Expressed at lower levels in stomach, intestine, epididymis and ovary. Expressed at very low levels in heart and spleen.

Dispensable for normal development and fertility. This is Spermatogenesis-associated protein 31G1 (Spata31g1) from Mus musculus (Mouse).